The following is a 235-amino-acid chain: Isoprenyl transferase (235 aa).

The active site involves Asp21. Residue Asp21 participates in Mg(2+) binding. Residues Gly22 to Arg25, Trp26, Lys34, His38, and Ser66 to Glu68 each bind substrate. The active-site Proton acceptor is Asn69. Residues Trp70, Arg72, Arg183, and Arg189–Ser191 contribute to the substrate site. A Mg(2+)-binding site is contributed by Glu202.

Belongs to the UPP synthase family. As to quaternary structure, homodimer. Mg(2+) is required as a cofactor.

Functionally, catalyzes the condensation of isopentenyl diphosphate (IPP) with allylic pyrophosphates generating different type of terpenoids. In Rickettsia felis (strain ATCC VR-1525 / URRWXCal2) (Rickettsia azadi), this protein is Isoprenyl transferase.